The primary structure comprises 513 residues: EGF-like domain-containing protein 1 (513 aa).

Residues 1-21 (MMHTFLRRLCVVALCLGYIKA) form the signal peptide. The 37-residue stretch at 72–108 (PTALCGPPCLNGGECYEPTVGTYMCMCPEAFYGNKCE) folds into the EGF-like domain. 3 cysteine pairs are disulfide-bonded: Cys-76–Cys-86, Cys-80–Cys-96, and Cys-98–Cys-107. Positions 115 to 364 (ECSGTEITIN…TSCDSVVCPS (250 aa)) constitute a ZP domain. A disordered region spans residues 356-411 (SCDSVVCPSPPQSVPSNPQNIPPANPQNIPPANPQNIPPANPQISPSSSQRKRRAA). Over residues 375 to 396 (NIPPANPQNIPPANPQNIPPAN) the composition is skewed to pro residues. N-linked (GlcNAc...) asparagine glycans are attached at residues Asn-438 and Asn-503.

As to expression, component of the acid-insoluble organic matrix of calcified layers of the shell (at protein level).

It is found in the secreted. The protein is EGF-like domain-containing protein 1 of Lottia gigantea (Giant owl limpet).